A 205-amino-acid chain; its full sequence is NADH-ubiquinone oxidoreductase chain 6 (205 aa).

The next 3 membrane-spanning stretches (helical) occupy residues F48–V68, Y86–D106, and V150–T170.

The protein belongs to the complex I subunit 6 family. In terms of assembly, complex I is composed of about 45 different subunits.

The protein resides in the mitochondrion membrane. The catalysed reaction is a ubiquinone + NADH + 5 H(+)(in) = a ubiquinol + NAD(+) + 4 H(+)(out). Core subunit of the mitochondrial membrane respiratory chain NADH dehydrogenase (Complex I) that is believed to belong to the minimal assembly required for catalysis. Complex I functions in the transfer of electrons from NADH to the respiratory chain. The immediate electron acceptor for the enzyme is believed to be ubiquinone. The sequence is that of NADH-ubiquinone oxidoreductase chain 6 (ND6) from Brassica campestris (Field mustard).